A 31-amino-acid polypeptide reads, in one-letter code: leu operon leader peptide (31 aa).

Functionally, involved in control of the biosynthesis of leucine. The chain is leu operon leader peptide (leuL) from Buchnera aphidicola subsp. Rhopalosiphum padi.